A 189-amino-acid chain; its full sequence is MDKNGEIVEKIKDEKSINQNLDFLRNYRDSYNRTPLMVACMLGMENAIDKLVENFDKLEDKDIEGSTALIWAVKNNRLGIAEKLLSKGSNVNTKDFSGKTPLMWSIIFGYSEMSYFLLEHGANVNDRNLEGETPLIVASKYGRSEIVKKLLELGADISARDLTGLTAEASARIFGRQEVIKIFTEVRRA.

ANK repeat units lie at residues 31 to 60 (YNRT…KLED), 64 to 93 (EGST…NVNT), 97 to 126 (SGKT…NVND), and 130 to 159 (EGET…DISA).

In Thermoplasma volcanium (strain ATCC 51530 / DSM 4299 / JCM 9571 / NBRC 15438 / GSS1), this protein is Putative ankyrin repeat protein TV1425.